The chain runs to 292 residues: VVGEGRGALGGAATMLRSLLLHSLRLCAQTASCLVLFPRFLGTAFMLWLLDFLCIRKHLLGRRRRGQPEIEVELNSDGEEVPPDDPPVCVSDDNRLCTLASLRAVWHGQKLDFFKQAHEGGPAPNSEVVLPDGFQNQHILDYARGNRPLVLNFGSCTUPPFMARMSAFQRLVTKYQRDVDFLIIYIEEAHPSDGWVTTDSPYSIPQHRSLEDRVSAARVLQQGAPECALVLDTMTNSSSSAYGAYFERLYIIQSGTIMYQGGRGPDGYQVSELRTWLERYDEQLHGPQPRRV.

Residues 1-30 (VVGEGRGALGGAATMLRSLLLHSLRLCAQT) lie on the Cytoplasmic side of the membrane. Residues 31–50 (ASCLVLFPRFLGTAFMLWLL) form a helical; Signal-anchor for type II membrane protein membrane-spanning segment. Over 51–292 (DFLCIRKHLL…QLHGPQPRRV (242 aa)) the chain is Extracellular. U158 is an active-site residue. U158 is a non-standard amino acid (selenocysteine).

This sequence belongs to the iodothyronine deiodinase family. In terms of assembly, monomer. Homodimer. May undergo minor heretodimerization with DIO1 and DIO2.

It is found in the cell membrane. It localises to the endosome membrane. The catalysed reaction is 3,3',5'-triiodo-L-thyronine + iodide + A + H(+) = L-thyroxine + AH2. It carries out the reaction 3,3'-diiodo-L-thyronine + iodide + A + H(+) = 3,3',5-triiodo-L-thyronine + AH2. The enzyme catalyses 3-iodo-L-thyronine + iodide + A + H(+) = 3,5-diiodo-L-thyronine + AH2. It catalyses the reaction L-thyronine + iodide + A + H(+) = 3-iodo-L-thyronine + AH2. The catalysed reaction is 3',5'-diiodo-L-thyronine + iodide + A + H(+) = 3,3',5'-triiodo-L-thyronine + AH2. It carries out the reaction 3'-iodo-L-thyronine + iodide + A + H(+) = 3,3'-diiodo-L-thyronine + AH2. The enzyme catalyses 3,3',5'-triiodothyronamine + iodide + A + H(+) = 3,3',5,5'-tetraiodothyronamine + AH2. It catalyses the reaction 3',5'-diiodothyronamine + iodide + A + H(+) = 3,3',5'-triiodothyronamine + AH2. The catalysed reaction is 3,3'-diiodothyronamine + iodide + A + H(+) = 3,3',5-triiodothyronamine + AH2. It carries out the reaction 3-iodothyronamine + iodide + A + H(+) = 3,5-diiodothyronamine + AH2. The enzyme catalyses 3'-iodothyronamine + iodide + A + H(+) = 3,3'-diiodothyronamine + AH2. It catalyses the reaction thyronamine + iodide + A + H(+) = 3-iodothyronamine + AH2. Its function is as follows. Plays a crucial role in the metabolism of thyroid hormones (TH) and has specific roles in TH activation and inactivation by deiodination.Catalyzes the deiodination of L-thyroxine (T4) to 3,3',5'-triiodothyronine (rT3), 3,5,3'-triiodothyronine (T3) to 3,3'-diiodothyronine (3,3'-T2), 3,5-diiodothyronine (3,5-T2) to 3-monoiodothyronine (3-T1), rT3 to 3',5'-diiodothyronine (3',5'-T2) and 3,3'-T2 to 3'-monoiodothyronine (3'-T1) via inner-ring deiodination (IRD). Catalyzes the deiodination of 3-T1 to L-thyronine (T0) via outer-ring deiodination (ORD). Catalyzes the tyrosyl ring deiodinations of 3,3',5,5'-tetraiodothyronamine, 3,3',5'-triiodothyronamine, 3,5,3'-triiodothyronamine, 3,5-diiodothyronamine, 3,3'-diiodothyronamine and 3-iodothyronamine. The polypeptide is Thyroxine 5-deiodinase (DIO3) (Ovis aries (Sheep)).